A 246-amino-acid chain; its full sequence is DNA repair protein RecO (246 aa).

Belongs to the RecO family.

Involved in DNA repair and RecF pathway recombination. The polypeptide is DNA repair protein RecO (Bifidobacterium adolescentis (strain ATCC 15703 / DSM 20083 / NCTC 11814 / E194a)).